The sequence spans 288 residues: Bifunctional protein FolD (288 aa).

Residues 164–166 and I230 contribute to the NADP(+) site; that span reads GTS.

It belongs to the tetrahydrofolate dehydrogenase/cyclohydrolase family. Homodimer.

It carries out the reaction (6R)-5,10-methylene-5,6,7,8-tetrahydrofolate + NADP(+) = (6R)-5,10-methenyltetrahydrofolate + NADPH. The enzyme catalyses (6R)-5,10-methenyltetrahydrofolate + H2O = (6R)-10-formyltetrahydrofolate + H(+). Its pathway is one-carbon metabolism; tetrahydrofolate interconversion. Its function is as follows. Catalyzes the oxidation of 5,10-methylenetetrahydrofolate to 5,10-methenyltetrahydrofolate and then the hydrolysis of 5,10-methenyltetrahydrofolate to 10-formyltetrahydrofolate. This is Bifunctional protein FolD from Mycoplasma mycoides subsp. mycoides SC (strain CCUG 32753 / NCTC 10114 / PG1).